The following is an 845-amino-acid chain: Ribosome-releasing factor 2, mitochondrial (845 aa).

A mitochondrion-targeting transit peptide spans 1–28 (MIIATSLRSQTFCTWRAWRAVHSTAVRL). The tr-type G domain occupies 38-330 (DRTRNIGIIA…GVVKYLPSPL (293 aa)). Residues 47–54 (AHIDAGKT), 111–115 (DTPGH), and 165–168 (NKMD) each bind GTP.

It belongs to the TRAFAC class translation factor GTPase superfamily. Classic translation factor GTPase family. EF-G/EF-2 subfamily.

It localises to the mitochondrion. In terms of biological role, mitochondrial GTPase that mediates the disassembly of ribosomes from messenger RNA at the termination of mitochondrial protein biosynthesis. Not involved in the GTP-dependent ribosomal translocation step during translation elongation. This is Ribosome-releasing factor 2, mitochondrial from Scheffersomyces stipitis (strain ATCC 58785 / CBS 6054 / NBRC 10063 / NRRL Y-11545) (Yeast).